Consider the following 159-residue polypeptide: Protein E6 (159 aa).

2 zinc fingers span residues 35–71 and 108–144; these read CVYC…CGKC and CYIC…CMQC.

This sequence belongs to the papillomaviridae E6 protein family. As to quaternary structure, forms homodimers. Interacts with ubiquitin-protein ligase UBE3A/E6-AP; this interaction stimulates UBE3A ubiquitin activity. Interacts with host TP53 and EP300; this interaction inhibits TP53 activity.

Its subcellular location is the host cytoplasm. The protein resides in the host nucleus. In terms of biological role, plays a major role in the induction and maintenance of cellular transformation. E6 associates with host UBE3A/E6-AP ubiquitin-protein ligase and modulates its activity. Sequesters tumor suppressor TP53 in the host cytoplasm and modulates its activity by interacting with host EP300 that results in the reduction of TP53 acetylation and activation. In turn, apoptosis induced by DNA damage is inhibited. E6 also protects host keratinocytes from apoptosis by mediating the degradation of host BAK1. May also inhibit host immune response. This Homo sapiens (Human) protein is Protein E6.